The sequence spans 119 residues: Large ribosomal subunit protein uL22 (119 aa).

Belongs to the universal ribosomal protein uL22 family. Part of the 50S ribosomal subunit.

This protein binds specifically to 23S rRNA; its binding is stimulated by other ribosomal proteins, e.g. L4, L17, and L20. It is important during the early stages of 50S assembly. It makes multiple contacts with different domains of the 23S rRNA in the assembled 50S subunit and ribosome. In terms of biological role, the globular domain of the protein is located near the polypeptide exit tunnel on the outside of the subunit, while an extended beta-hairpin is found that lines the wall of the exit tunnel in the center of the 70S ribosome. The polypeptide is Large ribosomal subunit protein uL22 (Rhodopirellula baltica (strain DSM 10527 / NCIMB 13988 / SH1)).